Consider the following 582-residue polypeptide: 15-cis-phytoene desaturase, chloroplastic/chromoplastic (582 aa).

The transit peptide at 1–93 (MNLLGSISTG…ELENTINFLE (93 aa)) directs the protein to the chloroplast and chromoplast. FAD is bound by residues A121, 140 to 141 (EA), K148, 165 to 166 (HI), and Y171. R306 lines the substrate pocket. D537 is an FAD binding site. Residue A545 coordinates substrate. M547 lines the FAD pocket.

It belongs to the carotenoid/retinoid oxidoreductase family. In terms of assembly, homotetramer. Requires FAD as cofactor. Expressed in flower buds and lips. Lower expression in leaves and roots.

Its subcellular location is the plastid. The protein localises to the chloroplast. It localises to the chromoplast. It is found in the membrane. It catalyses the reaction 2 a plastoquinone + 15-cis-phytoene = 9,9',15-tri-cis-zeta-carotene + 2 a plastoquinol. It functions in the pathway carotenoid biosynthesis; lycopene biosynthesis. Its function is as follows. Converts phytoene into zeta-carotene via the intermediary of phytofluene by the symmetrical introduction of two double bonds at the C-11 and C-11' positions of phytoene with a concomitant isomerization of two neighboring double bonds at the C9 and C9' positions from trans to cis. This is 15-cis-phytoene desaturase, chloroplastic/chromoplastic (PDS) from Oncidium hybrid cultivar (Orchid).